The chain runs to 333 residues: Taste receptor type 2 member 38 (333 aa).

The Extracellular segment spans residues 1–17 (MLTLTRIHTVSYEVRST). A helical membrane pass occupies residues 18-38 (FLFISVLEFAVGFLTNAFVFL). Topologically, residues 39-55 (VNFWDVVKRQPLSNSDC) are cytoplasmic. Residues 56–76 (VLLCLSISRLFLHGLLFLSAI) traverse the membrane as a helical segment. At 77 to 94 (QLTHFQKLSEPLNHSYQA) the chain is on the extracellular side. The helical transmembrane segment at 95–115 (INMLWMIANQANLWLAACLSL) threads the bilayer. The Cytoplasmic segment spans residues 116–142 (LYCSKLIRFSHTFLICLASWVSRKISQ). The helical transmembrane segment at 143 to 163 (MLLGIILCSCICTVLCVWCFF) threads the bilayer. Over 164–190 (SRPHFTVTTVLFMNNNTRLNWQIKDLN) the chain is Extracellular. A glycan (N-linked (GlcNAc...) asparagine) is linked at Asn-178. A helical membrane pass occupies residues 191 to 211 (LFYSFLFCYLWSVPPFLLFLV). The Cytoplasmic portion of the chain corresponds to 212–251 (SSGMLTVSLGRHMRTMKVYTRDSRDPSLEAHIKALKSLVS). Residues 252-272 (FFCFFVISSCAAFISVPLLIL) traverse the membrane as a helical segment. Residues 273–276 (WRDK) are Extracellular-facing. A helical membrane pass occupies residues 277–297 (IGVMVCVGIMAACPSGHAAVL). Residues 298-333 (ISGNAKLRRAVTTILLWAQSSLKVRADHKADSRTLC) lie on the Cytoplasmic side of the membrane.

It belongs to the G-protein coupled receptor T2R family.

The protein localises to the membrane. Its function is as follows. Receptor that may play a role in the perception of bitterness and is gustducin-linked. May play a role in sensing the chemical composition of the gastrointestinal content. The activity of this receptor may stimulate alpha gustducin, mediate PLC-beta-2 activation and lead to the gating of TRPM5. In Pan paniscus (Pygmy chimpanzee), this protein is Taste receptor type 2 member 38 (TAS2R38).